We begin with the raw amino-acid sequence, 87 residues long: Small ribosomal subunit protein uS17 (87 aa).

It belongs to the universal ribosomal protein uS17 family. As to quaternary structure, part of the 30S ribosomal subunit.

Functionally, one of the primary rRNA binding proteins, it binds specifically to the 5'-end of 16S ribosomal RNA. The chain is Small ribosomal subunit protein uS17 from Anoxybacillus flavithermus (strain DSM 21510 / WK1).